A 594-amino-acid chain; its full sequence is Chondroitin sulfate proteoglycan 5 (594 aa).

Positions Met1–Ala12 are enriched in polar residues. Positions Met1–Thr18 are cleaved as a signal peptide. Disordered stretches follow at residues Met1–Leu325 and Thr343–Arg418. Residues Ala19–Cys481 are Extracellular-facing. N-linked (GlcNAc...) asparagine glycans are attached at residues Asn26 and Asn44. Residues Ser140–Pro181 are compositionally biased toward low complexity. 2 stretches are compositionally biased toward pro residues: residues Ser182–Asn195 and Ile219–Gly229. Over residues Pro248–Arg259 the composition is skewed to low complexity. Residues Gly298–Gly310 are compositionally biased toward gly residues. Residues Ala338 to Gly377 are interaction with TNC and TNR. Residues Glu349–Glu375 are compositionally biased toward acidic residues. Asn413 and Asn425 each carry an N-linked (GlcNAc...) asparagine glycan. In terms of domain architecture, EGF-like spans Arg429–Glu471. Intrachain disulfides connect Cys432/Cys445, Cys439/Cys455, and Cys457/Cys470. The chain crosses the membrane as a helical span at residues Val482–Ala502. Residues Lys503–Gly594 lie on the Cytoplasmic side of the membrane. Residues Thr535–Gly594 form a disordered region. The span at His541–Glu564 shows a compositional bias: basic and acidic residues.

Binds TNC and TNR. The 80 kDa form but not the 140 kDa form can bind TNC and TNR when expressed at the cell surface. In terms of processing, different forms exist: the 140 kDa form (also reported as 130 kDa), which probably consists of the entire protein, and the 38 and 80 kDa forms, which are probably cleaved in their N-terminus. Increase in synaptic activity, results in shedding of the extracellular domain and expression at the cell surface of a 38 kDa form. A form of 200 kDa has also been reported, which is probably hyperglycosylated. N-glycosylated. Post-translationally, O-glycosylated; contains chondroitin sulfate glycans. Part-time proteoglycan, the 200 kDa form is the only one containing chondroitin sulfate glycans. In terms of tissue distribution, expressed in astroglial and neuronal surfaces in different parts of the embryonic brain. Expressed in adult brain and retina (at protein level).

It is found in the cell membrane. May function as a growth and differentiation factor involved in neuritogenesis and more particularly in neurite extension. The chain is Chondroitin sulfate proteoglycan 5 (CSPG5) from Gallus gallus (Chicken).